Consider the following 198-residue polypeptide: Transcriptional regulator GfcR (198 aa).

Belongs to the purine/pyrimidine phosphoribosyltransferase family. GfcR subfamily.

The sequence is that of Transcriptional regulator GfcR from Methanocorpusculum labreanum (strain ATCC 43576 / DSM 4855 / Z).